The chain runs to 205 residues: COP9 signalosome complex subunit 7 (205 aa).

The 135-residue stretch at 1–135 folds into the PCI domain; the sequence is MEEKISQAID…QTLHVSWALE (135 aa). A Phosphoserine modification is found at Ser183.

The protein belongs to the CSN7/EIF3M family. CSN7 subfamily. Component of the COP9 signalosome (CSN) complex.

Its function is as follows. Component of the COP9 signalosome (CSN) complex that acts as an regulator of the ubiquitin (Ubl) conjugation pathway by mediating the deneddylation of the cullin subunit of SCF-type E3 ubiquitin-protein ligase complexes. This Schizosaccharomyces pombe (strain 972 / ATCC 24843) (Fission yeast) protein is COP9 signalosome complex subunit 7 (csn71).